The following is a 1108-amino-acid chain: AP-3 complex subunit beta (1108 aa).

HEAT repeat units follow at residues 90–127 (DSALLSINTIQKSLNDQSQVIRASALRVMSSIRVIDII), 327–363 (IEAQKVGKSLVRILRSGPEVQYITLTNISTMVTLRPS), 397–433 (ENIGKILKEFKEYVKNEDKKFVAATIQAIGSCASTVP), and 434–471 (DVTESCIYGLMSLLSNQSTVVVAESVIVLKRLLQLNAT). Over residues 480–490 (KEKEKEKDVKE) the composition is skewed to basic and acidic residues. Disordered stretches follow at residues 480-501 (KEKEKEKDVKENQSTISKHSSS), 736-797 (DEEE…YDGE), and 811-835 (LFGITNDDNNQTANGIGGGGSGEEE). 2 stretches are compositionally biased toward acidic residues: residues 736 to 764 (DEEEEDEEEYDEEEEEEEYEEQNEYEDFF) and 780 to 797 (YDEDEYNQDIDDGEYDGE).

Belongs to the adaptor complexes large subunit family. In terms of assembly, adaptor protein complex 3 (AP-3) is a heterotetramer composed of two large adaptins (delta-type subunit and beta-type subunit), a medium adaptin (mu-type subunit) and a small adaptin (sigma-type subunit).

Its subcellular location is the endosome membrane. In terms of biological role, part of the AP-3 complex, an adaptor-related complex which is essential for the compartmentalization of the endocytic pathway. The sequence is that of AP-3 complex subunit beta (ap3b-1) from Dictyostelium discoideum (Social amoeba).